The sequence spans 236 residues: 5'-methylthioadenosine/S-adenosylhomocysteine nucleosidase (236 aa).

The Proton acceptor role is filled by E12. Residues G78, I153, and 174–175 (ME) each bind substrate. The Proton donor role is filled by D198.

The protein belongs to the PNP/UDP phosphorylase family. MtnN subfamily.

It catalyses the reaction S-adenosyl-L-homocysteine + H2O = S-(5-deoxy-D-ribos-5-yl)-L-homocysteine + adenine. The enzyme catalyses S-methyl-5'-thioadenosine + H2O = 5-(methylsulfanyl)-D-ribose + adenine. It carries out the reaction 5'-deoxyadenosine + H2O = 5-deoxy-D-ribose + adenine. The protein operates within amino-acid biosynthesis; L-methionine biosynthesis via salvage pathway; S-methyl-5-thio-alpha-D-ribose 1-phosphate from S-methyl-5'-thioadenosine (hydrolase route): step 1/2. Functionally, catalyzes the irreversible cleavage of the glycosidic bond in both 5'-methylthioadenosine (MTA) and S-adenosylhomocysteine (SAH/AdoHcy) to adenine and the corresponding thioribose, 5'-methylthioribose and S-ribosylhomocysteine, respectively. Also cleaves 5'-deoxyadenosine, a toxic by-product of radical S-adenosylmethionine (SAM) enzymes, into 5-deoxyribose and adenine. The chain is 5'-methylthioadenosine/S-adenosylhomocysteine nucleosidase from Shewanella oneidensis (strain ATCC 700550 / JCM 31522 / CIP 106686 / LMG 19005 / NCIMB 14063 / MR-1).